Consider the following 311-residue polypeptide: Acetyl-coenzyme A carboxylase carboxyl transferase subunit alpha (311 aa).

The CoA carboxyltransferase C-terminal domain occupies 36 to 286 (NLDKEVSKIF…GEYFLSELKK (251 aa)).

Belongs to the AccA family. In terms of assembly, acetyl-CoA carboxylase is a heterohexamer composed of biotin carboxyl carrier protein (AccB), biotin carboxylase (AccC) and two subunits each of ACCase subunit alpha (AccA) and ACCase subunit beta (AccD).

It localises to the cytoplasm. It carries out the reaction N(6)-carboxybiotinyl-L-lysyl-[protein] + acetyl-CoA = N(6)-biotinyl-L-lysyl-[protein] + malonyl-CoA. The protein operates within lipid metabolism; malonyl-CoA biosynthesis; malonyl-CoA from acetyl-CoA: step 1/1. Component of the acetyl coenzyme A carboxylase (ACC) complex. First, biotin carboxylase catalyzes the carboxylation of biotin on its carrier protein (BCCP) and then the CO(2) group is transferred by the carboxyltransferase to acetyl-CoA to form malonyl-CoA. This is Acetyl-coenzyme A carboxylase carboxyl transferase subunit alpha from Sulfurimonas denitrificans (strain ATCC 33889 / DSM 1251) (Thiomicrospira denitrificans (strain ATCC 33889 / DSM 1251)).